The following is a 199-amino-acid chain: Large ribosomal subunit protein bL25 (199 aa).

The protein belongs to the bacterial ribosomal protein bL25 family. CTC subfamily. Part of the 50S ribosomal subunit; part of the 5S rRNA/L5/L18/L25 subcomplex. Contacts the 5S rRNA. Binds to the 5S rRNA independently of L5 and L18.

Functionally, this is one of the proteins that binds to the 5S RNA in the ribosome where it forms part of the central protuberance. This chain is Large ribosomal subunit protein bL25, found in Pelobacter propionicus (strain DSM 2379 / NBRC 103807 / OttBd1).